Consider the following 524-residue polypeptide: Phosphoenolpyruvate carboxykinase (ATP) (524 aa).

Substrate is bound by residues Arg52, Tyr188, and Lys194. Residues Lys194, His213, and 229–237 (GLSGTGKTT) contribute to the ATP site. 2 residues coordinate Mn(2+): Lys194 and His213. Position 250 (Asp250) interacts with Mn(2+). ATP-binding residues include Glu278, Arg314, and Thr439. Arg314 is a substrate binding site.

This sequence belongs to the phosphoenolpyruvate carboxykinase (ATP) family. Mn(2+) is required as a cofactor.

Its subcellular location is the cytoplasm. The enzyme catalyses oxaloacetate + ATP = phosphoenolpyruvate + ADP + CO2. It participates in carbohydrate biosynthesis; gluconeogenesis. Functionally, involved in the gluconeogenesis. Catalyzes the conversion of oxaloacetate (OAA) to phosphoenolpyruvate (PEP) through direct phosphoryl transfer between the nucleoside triphosphate and OAA. The chain is Phosphoenolpyruvate carboxykinase (ATP) from Campylobacter jejuni subsp. jejuni serotype O:23/36 (strain 81-176).